The chain runs to 673 residues: UvrABC system protein B (673 aa).

The Helicase ATP-binding domain occupies 26–183; that stretch reads EGLEDGLAHQ…RRLAELQYAR (158 aa). Position 39–46 (39–46) interacts with ATP; that stretch reads GVTGSGKT. The short motif at 92-115 is the Beta-hairpin element; that stretch reads YYDYYQPEAYVPSSDTFIEKDASV. Positions 431–597 constitute a Helicase C-terminal domain; sequence QVDDLLSEIR…GLNKKVVDIL (167 aa). The UVR domain occupies 633–668; the sequence is QQKIHELEGLMMQHAQNLEFEEAAQVRDQLHQLRQL.

The protein belongs to the UvrB family. As to quaternary structure, forms a heterotetramer with UvrA during the search for lesions. Interacts with UvrC in an incision complex.

Its subcellular location is the cytoplasm. Functionally, the UvrABC repair system catalyzes the recognition and processing of DNA lesions. A damage recognition complex composed of 2 UvrA and 2 UvrB subunits scans DNA for abnormalities. Upon binding of the UvrA(2)B(2) complex to a putative damaged site, the DNA wraps around one UvrB monomer. DNA wrap is dependent on ATP binding by UvrB and probably causes local melting of the DNA helix, facilitating insertion of UvrB beta-hairpin between the DNA strands. Then UvrB probes one DNA strand for the presence of a lesion. If a lesion is found the UvrA subunits dissociate and the UvrB-DNA preincision complex is formed. This complex is subsequently bound by UvrC and the second UvrB is released. If no lesion is found, the DNA wraps around the other UvrB subunit that will check the other stand for damage. The chain is UvrABC system protein B from Enterobacter sp. (strain 638).